Reading from the N-terminus, the 166-residue chain is Putative pre-16S rRNA nuclease (166 aa).

Belongs to the YqgF nuclease family.

Its subcellular location is the cytoplasm. In terms of biological role, could be a nuclease involved in processing of the 5'-end of pre-16S rRNA. This Mesorhizobium japonicum (strain LMG 29417 / CECT 9101 / MAFF 303099) (Mesorhizobium loti (strain MAFF 303099)) protein is Putative pre-16S rRNA nuclease.